A 168-amino-acid chain; its full sequence is Photosystem I assembly protein Ycf3 (168 aa).

TPR repeat units follow at residues 35 to 68 (AFTY…EIDP), 72 to 105 (SYIL…NPFL), and 120 to 153 (GEQA…TPGN).

The protein belongs to the Ycf3 family.

Its subcellular location is the plastid. It localises to the chloroplast thylakoid membrane. Essential for the assembly of the photosystem I (PSI) complex. May act as a chaperone-like factor to guide the assembly of the PSI subunits. The chain is Photosystem I assembly protein Ycf3 from Amborella trichopoda.